A 585-amino-acid polypeptide reads, in one-letter code: Arginine--tRNA ligase (585 aa).

Residues 126–136 (PNIAKEMHVGH) carry the 'HIGH' region motif.

Belongs to the class-I aminoacyl-tRNA synthetase family. As to quaternary structure, monomer.

The protein resides in the cytoplasm. It carries out the reaction tRNA(Arg) + L-arginine + ATP = L-arginyl-tRNA(Arg) + AMP + diphosphate. This Crocosphaera subtropica (strain ATCC 51142 / BH68) (Cyanothece sp. (strain ATCC 51142)) protein is Arginine--tRNA ligase.